The primary structure comprises 382 residues: Galactokinase (382 aa).

Position 34–37 (34–37 (EHTD)) interacts with substrate. 124-130 (GAGLSSS) provides a ligand contact to ATP. Ser130 and Glu162 together coordinate Mg(2+). Residue Asp174 is the Proton acceptor of the active site. Tyr223 lines the substrate pocket.

This sequence belongs to the GHMP kinase family. GalK subfamily.

Its subcellular location is the cytoplasm. It catalyses the reaction alpha-D-galactose + ATP = alpha-D-galactose 1-phosphate + ADP + H(+). Its pathway is carbohydrate metabolism; galactose metabolism. In terms of biological role, catalyzes the transfer of the gamma-phosphate of ATP to D-galactose to form alpha-D-galactose-1-phosphate (Gal-1-P). In Salmonella gallinarum (strain 287/91 / NCTC 13346), this protein is Galactokinase.